Reading from the N-terminus, the 243-residue chain is DNA repair protein RecO (243 aa).

Belongs to the RecO family.

In terms of biological role, involved in DNA repair and RecF pathway recombination. This chain is DNA repair protein RecO, found in Bartonella quintana (strain Toulouse) (Rochalimaea quintana).